The following is a 361-amino-acid chain: Histidinol-phosphate aminotransferase (361 aa).

Lys-219 carries the post-translational modification N6-(pyridoxal phosphate)lysine.

Belongs to the class-II pyridoxal-phosphate-dependent aminotransferase family. Histidinol-phosphate aminotransferase subfamily. In terms of assembly, homodimer. The cofactor is pyridoxal 5'-phosphate.

It carries out the reaction L-histidinol phosphate + 2-oxoglutarate = 3-(imidazol-4-yl)-2-oxopropyl phosphate + L-glutamate. It participates in amino-acid biosynthesis; L-histidine biosynthesis; L-histidine from 5-phospho-alpha-D-ribose 1-diphosphate: step 7/9. The sequence is that of Histidinol-phosphate aminotransferase from Acinetobacter baumannii (strain SDF).